Here is a 583-residue protein sequence, read N- to C-terminus: MSSIYLHGLSRRRRIGSVIVAIYMLDSCGAFLSASGSGRYPGFSYRGLSVVTENIRSIHSSRRLKLTVNATNKEMYERQDSIHTLPLSPIPVMPSQLFQELALSQLELLANSIPCADRPGVSKIKTMALYLPQENVNTGQLEFLPAIHYPHPSRERVFIANEAASGVAPALPRTLTTLPGFAHATSLLPGYPMVSGGSEASVGVVEEVICDLTSGAAALSVPLFSGSRTVGVLLVSPSISKRRKGSAWTKEDREQVGRAGKSLSLALSMDTERAALQMQNDRAARALSDSLHQIKNPLQAMRTYGKLLQRRIADLGLLSNEGMTPQLLEMAEHLLVQSDRLADRLKPVDTIVDSLSERTPFVLNPAAPTKTQDSLVSLATPLVPWESETLEFARESKTSGELVIFMPTKKVAASGSNGPSNSTTSFSGNGSDVSTYTEDDGAGEMPSSLFSEMDLEMSFLSDVLDPVLAAFRAIAEDRGIMFSHDDTEDLPGVTICPQALQEALINVIDNAFTYVFLPKPGSRFGPNPSAEVRIRLVQNSKGSDAGVTILVEDNGPGIPAETRDQIFDRGKDQALDWTLRKHW.

A chloroplast-targeting transit peptide spans 1–50; that stretch reads MSSIYLHGLSRRRRIGSVIVAIYMLDSCGAFLSASGSGRYPGFSYRGLSV. A GAF region spans residues 97–277; sequence LFQELALSQL…SMDTERAALQ (181 aa). C115 contacts [3Fe-4S] cluster. H292 bears the Phosphohistidine; by autocatalysis mark. Residues 412–442 are disordered; the sequence is AASGSNGPSNSTTSFSGNGSDVSTYTEDDGA. The span at 414–431 shows a compositional bias: low complexity; it reads SGSNGPSNSTTSFSGNGS. The 137-residue stretch at 447-583 folds into the Histidine kinase domain; it reads SSLFSEMDLE…ALDWTLRKHW (137 aa).

This sequence belongs to the chloroplast sensor kinase protein family. Oligomerizes. It depends on [3Fe-4S] cluster as a cofactor. Post-translationally, autophosphorylates, possibly on His-292.

It is found in the plastid. It localises to the chloroplast stroma. It carries out the reaction ATP + protein L-histidine = ADP + protein N-phospho-L-histidine.. Functionally, sensor kinase that senses the plastoquinone (PQ) redox state involved in stoichiometry adjustment of both photosystems (e.g. long-term adaptation via transcriptional regulation of reaction center genes of photosystems I and II) and state transitions (e.g. short-term adaptation involving reversible post-translational phosphorylation of light-harvesting complex II, LHC II), thus linking photosynthesis with gene expression in chloroplasts. Reduced PQ suppresses its autophosphorylation activity. The protein is Chloroplast sensor kinase, chloroplastic of Phaeodactylum tricornutum (strain CCAP 1055/1).